The sequence spans 77 residues: Sec-independent protein translocase protein TatA (77 aa).

The chain crosses the membrane as a helical span at residues 1–21; sequence MGSFSIWHWLVVGILVLLLFG. The segment at 41-77 is disordered; that stretch reads KGMSEDDAPTPAPKQIDAQRAPDLSATPTPTAETENR. A compositionally biased stretch (polar residues) spans 66–77; it reads ATPTPTAETENR.

Belongs to the TatA/E family. As to quaternary structure, the Tat system comprises two distinct complexes: a TatABC complex, containing multiple copies of TatA, TatB and TatC subunits, and a separate TatA complex, containing only TatA subunits. Substrates initially bind to the TatABC complex, which probably triggers association of the separate TatA complex to form the active translocon.

It is found in the cell inner membrane. Its function is as follows. Part of the twin-arginine translocation (Tat) system that transports large folded proteins containing a characteristic twin-arginine motif in their signal peptide across membranes. TatA could form the protein-conducting channel of the Tat system. This chain is Sec-independent protein translocase protein TatA, found in Sphingopyxis alaskensis (strain DSM 13593 / LMG 18877 / RB2256) (Sphingomonas alaskensis).